The primary structure comprises 118 residues: Large ribosomal subunit protein uL18 (118 aa).

The protein belongs to the universal ribosomal protein uL18 family. In terms of assembly, part of the 50S ribosomal subunit; part of the 5S rRNA/L5/L18/L25 subcomplex. Contacts the 5S and 23S rRNAs.

In terms of biological role, this is one of the proteins that bind and probably mediate the attachment of the 5S RNA into the large ribosomal subunit, where it forms part of the central protuberance. The sequence is that of Large ribosomal subunit protein uL18 from Sulfurovum sp. (strain NBC37-1).